Here is a 271-residue protein sequence, read N- to C-terminus: Putative phosphoenolpyruvate synthase regulatory protein (271 aa).

ADP is bound at residue 151 to 158 (GVSRSGKT).

This sequence belongs to the pyruvate, phosphate/water dikinase regulatory protein family. PSRP subfamily.

It carries out the reaction [pyruvate, water dikinase] + ADP = [pyruvate, water dikinase]-phosphate + AMP + H(+). The enzyme catalyses [pyruvate, water dikinase]-phosphate + phosphate + H(+) = [pyruvate, water dikinase] + diphosphate. Bifunctional serine/threonine kinase and phosphorylase involved in the regulation of the phosphoenolpyruvate synthase (PEPS) by catalyzing its phosphorylation/dephosphorylation. In Burkholderia vietnamiensis (strain G4 / LMG 22486) (Burkholderia cepacia (strain R1808)), this protein is Putative phosphoenolpyruvate synthase regulatory protein.